The sequence spans 248 residues: Ribosomal RNA small subunit methyltransferase J (248 aa).

S-adenosyl-L-methionine-binding positions include 101–102 (RD), 117–118 (ER), 153–154 (SS), and Asp171.

Belongs to the methyltransferase superfamily. RsmJ family.

Its subcellular location is the cytoplasm. The catalysed reaction is guanosine(1516) in 16S rRNA + S-adenosyl-L-methionine = N(2)-methylguanosine(1516) in 16S rRNA + S-adenosyl-L-homocysteine + H(+). Functionally, specifically methylates the guanosine in position 1516 of 16S rRNA. In Proteus mirabilis (strain HI4320), this protein is Ribosomal RNA small subunit methyltransferase J.